We begin with the raw amino-acid sequence, 144 residues long: Ribonuclease P protein subunit RPR2 (144 aa).

The segment at 1 to 22 is disordered; the sequence is MGKKAHGGKMKPEIDENGTLLV. Residues C90, C93, C115, and C117 each coordinate Zn(2+).

Belongs to the eukaryotic/archaeal RNase P protein component 4 family. Component of nuclear RNase P. RNase P consists of an RNA moiety and at least 9 protein subunits including POP1, POP3, POP4, POP5, POP6, POP7, POP8, RPP1 and RPR2, many of which are shared with the RNase MPR complex. Zn(2+) serves as cofactor.

It localises to the nucleus. It carries out the reaction Endonucleolytic cleavage of RNA, removing 5'-extranucleotides from tRNA precursor.. In terms of biological role, component of ribonuclease P, a protein complex that generates mature tRNA molecules by cleaving their 5'-ends. The protein is Ribonuclease P protein subunit RPR2 (RPR2) of Saccharomyces cerevisiae (strain ATCC 204508 / S288c) (Baker's yeast).